The chain runs to 629 residues: Chaperone protein HtpG (629 aa).

The interval 1–343 (MQKQTLSFQA…SSDLPLNVSR (343 aa)) is a; substrate-binding. A b region spans residues 344-558 (ELLQESRAVK…DGDMSTQLAR (215 aa)). Residues 559-629 (MLKQAGQTVP…YVRRVNALLV (71 aa)) are c.

This sequence belongs to the heat shock protein 90 family. As to quaternary structure, homodimer.

It localises to the cytoplasm. Functionally, molecular chaperone. Has ATPase activity. The chain is Chaperone protein HtpG from Polaromonas naphthalenivorans (strain CJ2).